The following is a 338-amino-acid chain: uncharacterized protein (338 aa).

A helical membrane pass occupies residues 20 to 40; it reads IFFTLTFSLSNLFLAICYLFL.

The protein resides in the membrane. This is an uncharacterized protein from Schizosaccharomyces pombe (strain 972 / ATCC 24843) (Fission yeast).